A 439-amino-acid polypeptide reads, in one-letter code: Sodium-dependent phosphate transport protein 3 (439 aa).

N-linked (GlcNAc...) asparagine glycosylation is found at N47, N56, N68, and N69. 9 consecutive transmembrane segments (helical) span residues 98–118, 130–150, 183–203, 211–231, 273–293, 317–337, 350–369, 374–396, and 415–435; these read INYG…IFGA, SLLT…VIMV, TIAG…GGLI, FIFY…FTVI, LPLW…TIIL, LPFI…DFLL, LFSS…LPFV, VITI…GFII, and GFGL…ISQV.

The protein belongs to the major facilitator superfamily. Sodium/anion cotransporter family. In terms of tissue distribution, expressed in the small intestine, kidney, spleen and testis. Not detected in fetal brain, bone marrow, and mammary gland.

Its subcellular location is the apical cell membrane. The catalysed reaction is 3 Na(+)(out) + phosphate(out) = 3 Na(+)(in) + phosphate(in). The enzyme catalyses urate(out) + n chloride(in) = urate(in) + n chloride(out). Its function is as follows. Acts as a membrane potential-dependent organic anion transporter, the transport requires a low concentration of chloride ions. Mediates chloride-dependent transport of urate. Can actively transport inorganic phosphate into cells via Na(+) cotransport. This is Sodium-dependent phosphate transport protein 3 (SLC17A2) from Homo sapiens (Human).